The following is a 137-amino-acid chain: 2-iminobutanoate/2-iminopropanoate deaminase (137 aa).

Ser2 is modified (N-acetylserine). An N6-succinyllysine mark is found at Lys13 and Lys67. A Phosphothreonine modification is found at Thr74. Ser136 bears the Phosphoserine mark.

This sequence belongs to the RutC family. As to quaternary structure, homotrimer. Interacts with YTHDF2.

The protein localises to the cytoplasm. The protein resides in the nucleus. Its subcellular location is the peroxisome. It localises to the mitochondrion. The enzyme catalyses 2-iminobutanoate + H2O = 2-oxobutanoate + NH4(+). It carries out the reaction 2-iminopropanoate + H2O = pyruvate + NH4(+). In terms of biological role, catalyzes the hydrolytic deamination of enamine/imine intermediates that form during the course of normal metabolism. May facilitate the release of ammonia from these potentially toxic reactive metabolites, reducing their impact on cellular components. It may act on enamine/imine intermediates formed by several types of pyridoxal-5'-phosphate-dependent dehydratases including L-threonine dehydratase. Its function is as follows. Also promotes endoribonucleolytic cleavage of some transcripts by promoting recruitment of the ribonuclease P/MRP complex. Acts by bridging YTHDF2 and the ribonuclease P/MRP complex. RIDA/HRSP12 binds to N6-methyladenosine (m6A)-containing mRNAs containing a 5'-GGUUC-3' motif: cooperative binding of RIDA/HRSP12 and YTHDF2 to such transcripts lead to recruitment of the ribonuclease P/MRP complex and subsequent endoribonucleolytic cleavage. The sequence is that of 2-iminobutanoate/2-iminopropanoate deaminase from Bos taurus (Bovine).